The sequence spans 276 residues: Ice-binding protein (276 aa).

Residues 1–24 (MKILKRIPVLAVLLVGLMTNCSND) form the signal peptide. Positions 79–82 (TGIT) match the Ice-binding site motif (T-A/G-X-T/N) 1 motif. A disulfide bridge connects residues Cys107 and Cys124. Short sequence motifs (ice-binding site motif (T-A/G-X-T/N)) lie at residues 245–248 (TGIN) and 263–266 (TAVT).

This sequence belongs to the ice-binding protein family. Monomer.

The protein localises to the secreted. In terms of biological role, has antifreeze activity for survival in a subzero environment. Binds to the surface of ice crystals and inhibits their growth. Has high thermal hysteresis (TH) activity, which is the ability to lower the freezing point of an aqueous solution below its melting point, and thus the freezing of the cell fluid can be prevented protecting the organism from ice damage. The TH activity of this protein is 2.2 degrees Celsius at 5 uM and 2.5 degrees Celsius at 50 uM. The polypeptide is Ice-binding protein (Flavobacterium frigoris (strain PS1)).